The primary structure comprises 162 residues: Cyclic pyranopterin monophosphate synthase (162 aa).

Residues 75–77 (MCH) and 116–117 (ME) each bind substrate. Aspartate 131 is a catalytic residue.

This sequence belongs to the MoaC family. As to quaternary structure, homohexamer; trimer of dimers.

The enzyme catalyses (8S)-3',8-cyclo-7,8-dihydroguanosine 5'-triphosphate = cyclic pyranopterin phosphate + diphosphate. It participates in cofactor biosynthesis; molybdopterin biosynthesis. In terms of biological role, catalyzes the conversion of (8S)-3',8-cyclo-7,8-dihydroguanosine 5'-triphosphate to cyclic pyranopterin monophosphate (cPMP). This Staphylococcus epidermidis (strain ATCC 35984 / DSM 28319 / BCRC 17069 / CCUG 31568 / BM 3577 / RP62A) protein is Cyclic pyranopterin monophosphate synthase.